Reading from the N-terminus, the 835-residue chain is Leucine--tRNA ligase (835 aa).

The 'HIGH' region motif lies at 36–46 (PYPSGKIHVGH). A 'KMSKS' region motif is present at residues 602–606 (KMSKS). K605 serves as a coordination point for ATP.

The protein belongs to the class-I aminoacyl-tRNA synthetase family.

It is found in the cytoplasm. The catalysed reaction is tRNA(Leu) + L-leucine + ATP = L-leucyl-tRNA(Leu) + AMP + diphosphate. The polypeptide is Leucine--tRNA ligase (Rickettsia peacockii (strain Rustic)).